Here is a 157-residue protein sequence, read N- to C-terminus: Peptide methionine sulfoxide reductase MsrA (157 aa).

Residue C10 is part of the active site.

The protein belongs to the MsrA Met sulfoxide reductase family.

It catalyses the reaction L-methionyl-[protein] + [thioredoxin]-disulfide + H2O = L-methionyl-(S)-S-oxide-[protein] + [thioredoxin]-dithiol. It carries out the reaction [thioredoxin]-disulfide + L-methionine + H2O = L-methionine (S)-S-oxide + [thioredoxin]-dithiol. Its function is as follows. Has an important function as a repair enzyme for proteins that have been inactivated by oxidation. Catalyzes the reversible oxidation-reduction of methionine sulfoxide in proteins to methionine. The chain is Peptide methionine sulfoxide reductase MsrA from Clostridium botulinum (strain Kyoto / Type A2).